A 539-amino-acid chain; its full sequence is Probable transcription factor GLK2 (539 aa).

The tract at residues 86–218 (FASSPDDEPP…NSHGKRKVKV (133 aa)) is disordered. Composition is skewed to low complexity over residues 99–111 (SAPG…AAAG) and 121–130 (AAAAAAAAAA). A compositionally biased stretch (basic and acidic residues) spans 144–161 (KKDDEERSSSLPEEKDAK). The 60-residue stretch at 212–271 (GKRKVKVDWTPELHRRFVQAVEQLGIDKAVPSRILELMGIECLTRHNIASHLQKYRSHRK) folds into the HTH myb-type domain. The segment at residues 242–267 (PSRILELMGIECLTRHNIASHLQKYR) is a DNA-binding region (H-T-H motif).

Expressed in leaves.

The protein localises to the nucleus. Its function is as follows. Probable transcriptional activator that promotes chloroplast development. Acts as an activator of nuclear photosynthetic genes involved in chlorophyll biosynthesis, light harvesting, and electron transport. The chain is Probable transcription factor GLK2 (GLK2) from Oryza sativa subsp. japonica (Rice).